The primary structure comprises 157 residues: 6,7-dimethyl-8-ribityllumazine synthase (157 aa).

5-amino-6-(D-ribitylamino)uracil-binding positions include F22, 56-58 (AFE), and 81-83 (VLI). (2S)-2-hydroxy-3-oxobutyl phosphate is bound at residue 86–87 (ET). The active-site Proton donor is H89. Residue F114 participates in 5-amino-6-(D-ribitylamino)uracil binding. R128 serves as a coordination point for (2S)-2-hydroxy-3-oxobutyl phosphate.

It belongs to the DMRL synthase family.

It catalyses the reaction (2S)-2-hydroxy-3-oxobutyl phosphate + 5-amino-6-(D-ribitylamino)uracil = 6,7-dimethyl-8-(1-D-ribityl)lumazine + phosphate + 2 H2O + H(+). The protein operates within cofactor biosynthesis; riboflavin biosynthesis; riboflavin from 2-hydroxy-3-oxobutyl phosphate and 5-amino-6-(D-ribitylamino)uracil: step 1/2. Catalyzes the formation of 6,7-dimethyl-8-ribityllumazine by condensation of 5-amino-6-(D-ribitylamino)uracil with 3,4-dihydroxy-2-butanone 4-phosphate. This is the penultimate step in the biosynthesis of riboflavin. The chain is 6,7-dimethyl-8-ribityllumazine synthase from Chlamydia muridarum (strain MoPn / Nigg).